A 179-amino-acid polypeptide reads, in one-letter code: Translation initiation factor IF-3 (179 aa).

Belongs to the IF-3 family. In terms of assembly, monomer.

Its subcellular location is the cytoplasm. Its function is as follows. IF-3 binds to the 30S ribosomal subunit and shifts the equilibrium between 70S ribosomes and their 50S and 30S subunits in favor of the free subunits, thus enhancing the availability of 30S subunits on which protein synthesis initiation begins. In Buchnera aphidicola subsp. Acyrthosiphon pisum (strain 5A), this protein is Translation initiation factor IF-3.